We begin with the raw amino-acid sequence, 432 residues long: Adenosylhomocysteinase (432 aa).

S2 is subject to N-acetylserine. Residues T57, D131, and E156 each coordinate substrate. The residue at position 183 (S183) is a Phosphoserine. An NAD binding region spans residues 183-350 (SVTKSKFDNL…EGRLVNLGCA (168 aa)). Substrate is bound by residues K186 and D190. Position 186 is an N6-(2-hydroxyisobutyryl)lysine (K186). Position 193 is a phosphotyrosine (Y193).

The protein belongs to the adenosylhomocysteinase family. As to quaternary structure, homotetramer. Interaction with AHCYL1. Requires NAD(+) as cofactor.

It localises to the cytoplasm. It is found in the melanosome. Its subcellular location is the nucleus. The protein localises to the endoplasmic reticulum. It catalyses the reaction S-adenosyl-L-homocysteine + H2O = L-homocysteine + adenosine. Its pathway is amino-acid biosynthesis; L-homocysteine biosynthesis; L-homocysteine from S-adenosyl-L-homocysteine: step 1/1. In terms of biological role, catalyzes the hydrolysis of S-adenosyl-L-homocysteine to form adenosine and homocysteine. Binds copper ions. The sequence is that of Adenosylhomocysteinase (AHCY) from Macaca fascicularis (Crab-eating macaque).